The following is a 278-amino-acid chain: MARLKLIIAYAGTRYAGWQIQCLPAGRPHAVQQPTVQQAVEDAAKAILGSAVRVHGAGRTDSGVHAEGQVAHLDIPDAKAAVDWRRALNAKLPEDISVLQAAVVPDGFHARFDAVKKRYTYRIWLTRAFVLPQRRPFVHMTGPLDIAAMDAAAAFMTGTHDFASFQNAGTELATTVRTVYSITRTPGLAPDDFPRSHDTTPRAPLELAWHFEADGFLKQMVRNMMGLLLWTGTGRCAPEDVPAIIAARDRRLSAPTAPACGLTMERVFYPDECCPPES.

Asp61 acts as the Nucleophile in catalysis. Residue Tyr119 participates in substrate binding.

The protein belongs to the tRNA pseudouridine synthase TruA family. As to quaternary structure, homodimer.

The catalysed reaction is uridine(38/39/40) in tRNA = pseudouridine(38/39/40) in tRNA. Functionally, formation of pseudouridine at positions 38, 39 and 40 in the anticodon stem and loop of transfer RNAs. The chain is tRNA pseudouridine synthase A from Oleidesulfovibrio alaskensis (strain ATCC BAA-1058 / DSM 17464 / G20) (Desulfovibrio alaskensis).